A 376-amino-acid polypeptide reads, in one-letter code: NAD(P)H-quinone oxidoreductase subunit 1, chloroplastic (376 aa).

9 helical membrane-spanning segments follow: residues 27-47, 65-85, 97-117, 130-150, 166-186, 251-271, 272-292, 310-330, and 353-373; these read LISI…GVLV, PEYA…KLLI, WLFS…YLVV, LGIF…LIAG, AAQS…ISLL, GIKF…SSLF, AVVL…IFFI, LIIP…FIFF, and FLLP…LTLF.

This sequence belongs to the complex I subunit 1 family. In terms of assembly, NDH is composed of at least 16 different subunits, 5 of which are encoded in the nucleus.

Its subcellular location is the plastid. The protein localises to the chloroplast thylakoid membrane. It catalyses the reaction a plastoquinone + NADH + (n+1) H(+)(in) = a plastoquinol + NAD(+) + n H(+)(out). The enzyme catalyses a plastoquinone + NADPH + (n+1) H(+)(in) = a plastoquinol + NADP(+) + n H(+)(out). Its function is as follows. NDH shuttles electrons from NAD(P)H:plastoquinone, via FMN and iron-sulfur (Fe-S) centers, to quinones in the photosynthetic chain and possibly in a chloroplast respiratory chain. The immediate electron acceptor for the enzyme in this species is believed to be plastoquinone. Couples the redox reaction to proton translocation, and thus conserves the redox energy in a proton gradient. This Chara vulgaris (Common stonewort) protein is NAD(P)H-quinone oxidoreductase subunit 1, chloroplastic.